The primary structure comprises 62 residues: Potassium channel toxin kappa-KTx 1.4 (62 aa).

The signal sequence occupies residues 1-26 (MKSCLINVSLLILLLLPILGYASVNA). The propeptide occupies 27-38 (ESIDGENDFEEE). Intrachain disulfides connect Cys-43-Cys-61 and Cys-47-Cys-57.

It belongs to the short scorpion toxin superfamily. Potassium channel inhibitor kappa-KTx family. Kappa-KTx 1 subfamily. In terms of tissue distribution, expressed by the venom gland.

The protein localises to the secreted. Shows structural homology with WaTx suggesting that it acts as a cell-penetrating peptide (CPP) with defensive purpose that induces pain by specifically activating mammalian sensory neuron TRPA1 channels. Has no effect on the voltage-gated potassium channels tested. In Heterometrus petersii (Asian forest scorpion), this protein is Potassium channel toxin kappa-KTx 1.4.